A 312-amino-acid chain; its full sequence is Regulation of nuclear pre-mRNA domain-containing protein 1A (312 aa).

At Ser-2 the chain carries N-acetylserine. Residues 2–133 (SAFSEAALEK…QLKQALYGDK (132 aa)) enclose the CID domain. Ser-153, Ser-156, and Ser-285 each carry phosphoserine. A coiled-coil region spans residues 244–286 (LADFLRCQKEALAEKEHKLEEYKRKLARVSLVRKELRSRIQSL).

The protein belongs to the UPF0400 (RTT103) family. May form a heterodimer with RPRD1B. Associates with the RNA polymerase II subunit POLR2A (via CTD phosphorylated at 'Ser-2' and 'Ser-7' of the heptad repeats).

It is found in the nucleus. In terms of biological role, interacts with phosphorylated C-terminal heptapeptide repeat domain (CTD) of the largest RNA polymerase II subunit POLR2A, and participates in dephosphorylation of the CTD by RPAP2. May act as a negative regulator of cyclin-D1 (CCND1) and cyclin-E (CCNE1) in the cell cycle. The polypeptide is Regulation of nuclear pre-mRNA domain-containing protein 1A (RPRD1A) (Pongo abelii (Sumatran orangutan)).